Here is a 464-residue protein sequence, read N- to C-terminus: tRNA-2-methylthio-N(6)-dimethylallyladenosine synthase (464 aa).

In terms of domain architecture, MTTase N-terminal spans Gly19–Leu135. Positions 28, 64, 98, 170, 174, and 177 each coordinate [4Fe-4S] cluster. Positions Arg156 to Gln393 constitute a Radical SAM core domain. A TRAM domain is found at Glu396–Leu464.

This sequence belongs to the methylthiotransferase family. MiaB subfamily. Monomer. Requires [4Fe-4S] cluster as cofactor.

The protein localises to the cytoplasm. It catalyses the reaction N(6)-dimethylallyladenosine(37) in tRNA + (sulfur carrier)-SH + AH2 + 2 S-adenosyl-L-methionine = 2-methylsulfanyl-N(6)-dimethylallyladenosine(37) in tRNA + (sulfur carrier)-H + 5'-deoxyadenosine + L-methionine + A + S-adenosyl-L-homocysteine + 2 H(+). Functionally, catalyzes the methylthiolation of N6-(dimethylallyl)adenosine (i(6)A), leading to the formation of 2-methylthio-N6-(dimethylallyl)adenosine (ms(2)i(6)A) at position 37 in tRNAs that read codons beginning with uridine. The protein is tRNA-2-methylthio-N(6)-dimethylallyladenosine synthase of Prochlorococcus marinus (strain MIT 9215).